A 252-amino-acid polypeptide reads, in one-letter code: MMLHAQHMPGQPGAPSLVFLHGFSGDCREWQPVGEQFHGCSRLYIDLPGHGGSAAIPVGGFADVIRLLRATLISYNILKFWLVGYSLGGRVAMMAACQGIPGLCGLVVEGGHPGLQNEQARVERRLSDGRWAERFRREPLTEVFHDWYQQPVFASLTAQQRQALTALRSQNNGETLAAMLEATSLAVQPDLREALNALAFPFYYLCGERDSKFRALAQEVAATCHVIRNAGHNAHRENPAGVVDSLAQILRL.

This sequence belongs to the AB hydrolase superfamily. MenH family. Monomer.

The enzyme catalyses 5-enolpyruvoyl-6-hydroxy-2-succinyl-cyclohex-3-ene-1-carboxylate = (1R,6R)-6-hydroxy-2-succinyl-cyclohexa-2,4-diene-1-carboxylate + pyruvate. The protein operates within quinol/quinone metabolism; 1,4-dihydroxy-2-naphthoate biosynthesis; 1,4-dihydroxy-2-naphthoate from chorismate: step 3/7. Its pathway is quinol/quinone metabolism; menaquinone biosynthesis. In terms of biological role, catalyzes a proton abstraction reaction that results in 2,5-elimination of pyruvate from 2-succinyl-5-enolpyruvyl-6-hydroxy-3-cyclohexene-1-carboxylate (SEPHCHC) and the formation of 2-succinyl-6-hydroxy-2,4-cyclohexadiene-1-carboxylate (SHCHC). The polypeptide is 2-succinyl-6-hydroxy-2,4-cyclohexadiene-1-carboxylate synthase (Salmonella paratyphi B (strain ATCC BAA-1250 / SPB7)).